The sequence spans 178 residues: tRNA (cytidine(56)-2'-O)-methyltransferase (178 aa).

S-adenosyl-L-methionine is bound by residues L84, G109 to V113, and I127 to E134.

The protein belongs to the aTrm56 family. Homodimer.

Its subcellular location is the cytoplasm. The catalysed reaction is cytidine(56) in tRNA + S-adenosyl-L-methionine = 2'-O-methylcytidine(56) in tRNA + S-adenosyl-L-homocysteine + H(+). In terms of biological role, specifically catalyzes the AdoMet-dependent 2'-O-ribose methylation of cytidine at position 56 in tRNAs. This chain is tRNA (cytidine(56)-2'-O)-methyltransferase, found in Methanococcoides burtonii (strain DSM 6242 / NBRC 107633 / OCM 468 / ACE-M).